The following is a 1090-amino-acid chain: Protein transport protein Sec24A (1090 aa).

Disordered stretches follow at residues 1–260 (MAQP…AHNT) and 272–325 (TPQL…TQTP). The span at 8-28 (AARGAAASLQAQNGAASASGS) shows a compositional bias: low complexity. Composition is skewed to polar residues over residues 29–55 (PYTN…SQPP), 138–151 (WQYN…QTNH), and 162–184 (GNPN…QTSF). Pro residues predominate over residues 194–236 (QNPPLPPTFQPGAPPGPPPAGGPPPSRGPAPQKTPPRAAPPPS). 3 stretches are compositionally biased toward polar residues: residues 237–258 (FNSA…TAAH), 274–286 (QLVN…SRSV), and 313–325 (SYPS…TQTP). 4 residues coordinate Zn(2+): C428, C431, C449, and C452. Positions 428–452 (CRSCRTYINPFVNFLDQRRWKCNLC) are zinc finger-like. A Gelsolin-like repeat occupies 963–1036 (PQPPILQLSV…PESARIAAFI (74 aa)).

It belongs to the SEC23/SEC24 family. SEC24 subfamily. COPII is composed of at least five proteins: the Sec23/24 complex, the Sec13/31 complex and Sar1. Interacts with TMED2. Interacts (as part of the Sec23/24 complex) with SEC22B; recruits SEC22B into COPII-coated vesicles for its transport from the endoplasmic reticulum to the Golgi. Interacts with STING1; promoting STING1 translocation to COPII vesicles in a STEEP1-dependent manner. Interacts with TMEM39A. Interacts with SACM1L; this interaction is reduced in the absence of TMEM39A. Interacts with kinase FAM20C; transport of FAM20C from the endoplasmic reticulum to the Golgi is likely to be mediated by COPII vesicles.

It is found in the cytoplasmic vesicle. Its subcellular location is the COPII-coated vesicle membrane. The protein localises to the endoplasmic reticulum membrane. It localises to the cytoplasm. The protein resides in the cytosol. Component of the coat protein complex II (COPII) which promotes the formation of transport vesicles from the endoplasmic reticulum (ER). The coat has two main functions, the physical deformation of the endoplasmic reticulum membrane into vesicles and the selection of cargo molecules for their transport to the Golgi complex. Plays a central role in cargo selection within the COPII complex and together with SEC24B may have a different specificity compared to SEC24C and SEC24D. May package preferentially cargos with cytoplasmic DxE or LxxLE motifs and may also recognize conformational epitopes. The protein is Protein transport protein Sec24A of Mus musculus (Mouse).